Consider the following 473-residue polypeptide: Photosystem II CP43 reaction center protein (473 aa).

Positions M1–E14 are excised as a propeptide. At T15 the chain carries N-acetylthreonine. Phosphothreonine is present on T15. A run of 5 helical transmembrane segments spans residues L69–A93, L134–N155, K178–T200, K255–S275, and W291–A312. E367 is a [CaMn4O5] cluster binding site. A helical membrane pass occupies residues R447–P471.

The protein belongs to the PsbB/PsbC family. PsbC subfamily. PSII is composed of 1 copy each of membrane proteins PsbA, PsbB, PsbC, PsbD, PsbE, PsbF, PsbH, PsbI, PsbJ, PsbK, PsbL, PsbM, PsbT, PsbX, PsbY, PsbZ, Psb30/Ycf12, at least 3 peripheral proteins of the oxygen-evolving complex and a large number of cofactors. It forms dimeric complexes. The cofactor is Binds multiple chlorophylls and provides some of the ligands for the Ca-4Mn-5O cluster of the oxygen-evolving complex. It may also provide a ligand for a Cl- that is required for oxygen evolution. PSII binds additional chlorophylls, carotenoids and specific lipids..

It is found in the plastid. It localises to the chloroplast thylakoid membrane. Functionally, one of the components of the core complex of photosystem II (PSII). It binds chlorophyll and helps catalyze the primary light-induced photochemical processes of PSII. PSII is a light-driven water:plastoquinone oxidoreductase, using light energy to abstract electrons from H(2)O, generating O(2) and a proton gradient subsequently used for ATP formation. This Pelargonium hortorum (Common geranium) protein is Photosystem II CP43 reaction center protein.